We begin with the raw amino-acid sequence, 74 residues long: Defensin Lc-def (74 aa).

A signal peptide spans 1–27; the sequence is MEKKTVAALSFLFIVLFVAQEIAVTEA. 4 disulfide bridges follow: Cys-30–Cys-74, Cys-41–Cys-62, Cys-47–Cys-68, and Cys-51–Cys-70.

It localises to the secreted. Its function is as follows. Has antifungal activity against the phytopathogenic fungus A.niger VKM F-2259, but not against A.alternata VKM F-3047. Does not inhibit trypsin or chymotrypsin. The polypeptide is Defensin Lc-def (Lens culinaris subsp. culinaris (Cultivated lentil)).